A 432-amino-acid polypeptide reads, in one-letter code: Glutamyl-tRNA reductase (432 aa).

Residues 49–52 (TCNR), Ser-109, 114–116 (EGQ), and Gln-120 each bind substrate. Cys-50 (nucleophile) is an active-site residue. 189–194 (GAGKMS) is an NADP(+) binding site.

It belongs to the glutamyl-tRNA reductase family. Homodimer.

It localises to the plastid. It is found in the cyanelle. The catalysed reaction is (S)-4-amino-5-oxopentanoate + tRNA(Glu) + NADP(+) = L-glutamyl-tRNA(Glu) + NADPH + H(+). It participates in porphyrin-containing compound metabolism; protoporphyrin-IX biosynthesis; 5-aminolevulinate from L-glutamyl-tRNA(Glu): step 1/2. It functions in the pathway porphyrin-containing compound metabolism; chlorophyll biosynthesis. In terms of biological role, catalyzes the NADPH-dependent reduction of glutamyl-tRNA(Glu) to glutamate 1-semialdehyde (GSA). This chain is Glutamyl-tRNA reductase, found in Cyanophora paradoxa.